The sequence spans 357 residues: Membrane-bound lytic murein transglycosylase C (357 aa).

The first 16 residues, 1–16 (MKKILPLVIIAPLLIS), serve as a signal peptide directing secretion. C17 is lipidated: N-palmitoyl cysteine. The S-diacylglycerol cysteine moiety is linked to residue C17.

Belongs to the transglycosylase Slt family.

It localises to the cell outer membrane. It catalyses the reaction Exolytic cleavage of the (1-&gt;4)-beta-glycosidic linkage between N-acetylmuramic acid (MurNAc) and N-acetylglucosamine (GlcNAc) residues in peptidoglycan, from either the reducing or the non-reducing ends of the peptidoglycan chains, with concomitant formation of a 1,6-anhydrobond in the MurNAc residue.. Murein-degrading enzyme. May play a role in recycling of muropeptides during cell elongation and/or cell division. The chain is Membrane-bound lytic murein transglycosylase C from Sodalis glossinidius (strain morsitans).